Consider the following 120-residue polypeptide: Large ribosomal subunit protein uL18 (120 aa).

Belongs to the universal ribosomal protein uL18 family. In terms of assembly, part of the 50S ribosomal subunit; part of the 5S rRNA/L5/L18/L25 subcomplex. Contacts the 5S and 23S rRNAs.

In terms of biological role, this is one of the proteins that bind and probably mediate the attachment of the 5S RNA into the large ribosomal subunit, where it forms part of the central protuberance. This is Large ribosomal subunit protein uL18 from Methylobacterium radiotolerans (strain ATCC 27329 / DSM 1819 / JCM 2831 / NBRC 15690 / NCIMB 10815 / 0-1).